Here is a 280-residue protein sequence, read N- to C-terminus: RNA polymerase II holoenzyme cyclin-like subunit (280 aa).

The 128-residue stretch at 23 to 150 folds into the Cyclin N-terminal domain; sequence ERRKGLEDIF…LIEELGTYLV (128 aa).

The protein belongs to the cyclin family. Cyclin C subfamily. Component of the SRB8-11 complex, a regulatory module of the Mediator complex.

The protein localises to the nucleus. Its function is as follows. Component of the SRB8-11 complex. The SRB8-11 complex is a regulatory module of the Mediator complex which is itself involved in regulation of basal and activated RNA polymerase II-dependent transcription. The SRB8-11 complex may be involved in the transcriptional repression of a subset of genes regulated by Mediator. It may inhibit the association of the Mediator complex with RNA polymerase II to form the holoenzyme complex. The SRB8-11 complex phosphorylates the C-terminal domain (CTD) of the largest subunit of RNA polymerase II. The protein is RNA polymerase II holoenzyme cyclin-like subunit (SSN8) of Yarrowia lipolytica (strain CLIB 122 / E 150) (Yeast).